The chain runs to 207 residues: LexA repressor (207 aa).

Positions 29-49 (VREICSAVDLSSTSTVHGHLA) form a DNA-binding region, H-T-H motif. Residues Ser128 and Lys166 each act as for autocatalytic cleavage activity in the active site.

It belongs to the peptidase S24 family. In terms of assembly, homodimer.

It carries out the reaction Hydrolysis of Ala-|-Gly bond in repressor LexA.. Its function is as follows. Represses a number of genes involved in the response to DNA damage (SOS response), including recA and lexA. In the presence of single-stranded DNA, RecA interacts with LexA causing an autocatalytic cleavage which disrupts the DNA-binding part of LexA, leading to derepression of the SOS regulon and eventually DNA repair. In Lactobacillus johnsonii (strain CNCM I-12250 / La1 / NCC 533), this protein is LexA repressor.